The following is a 471-amino-acid chain: ATP synthase subunit beta (471 aa).

ATP is bound at residue 153–160 (GGAGVGKT).

The protein belongs to the ATPase alpha/beta chains family. F-type ATPases have 2 components, CF(1) - the catalytic core - and CF(0) - the membrane proton channel. CF(1) has five subunits: alpha(3), beta(3), gamma(1), delta(1), epsilon(1). CF(0) has four main subunits: a(1), b(1), b'(1) and c(9-12).

It is found in the cell membrane. It carries out the reaction ATP + H2O + 4 H(+)(in) = ADP + phosphate + 5 H(+)(out). Its function is as follows. Produces ATP from ADP in the presence of a proton gradient across the membrane. The catalytic sites are hosted primarily by the beta subunits. In Chloroflexus aurantiacus (strain ATCC 29364 / DSM 637 / Y-400-fl), this protein is ATP synthase subunit beta.